A 301-amino-acid polypeptide reads, in one-letter code: Glycine--tRNA ligase alpha subunit (301 aa).

It belongs to the class-II aminoacyl-tRNA synthetase family. Tetramer of two alpha and two beta subunits.

The protein localises to the cytoplasm. It catalyses the reaction tRNA(Gly) + glycine + ATP = glycyl-tRNA(Gly) + AMP + diphosphate. In Shewanella baltica (strain OS223), this protein is Glycine--tRNA ligase alpha subunit.